Reading from the N-terminus, the 514-residue chain is MAQTLQMEIPNFGNSILECLNEQRLQGLYCDVSVVVKGHAFKAHRAVLAASSSYFRDLFNSSRSAVVELPAAVQPQSFQQILTFCYTGRLSMNMGDQFLLIYTAGFLQIQEIMEKGTEFFLKVSSPSCDSQGLHPEEAPSSEPQSPVAQTLGWPACSTPLPLVSRVKTEQELDSVQCTPMAKRLWDSSQKEAGGSGGNNGSRKMAKFSTPDLALNRMPQPLSMATATAAVAVVAVGGCVSGPSMSERTSPGTSSAYTSDSPSSYHNEEDEEEDAGEEGTDEQYRQICNMYTMYSMLNVGQTAEKVEALPEQVVLESRSRIRVRQDLASLPAELINQIGNRCHPKLYDEGDPSEKLELVTGTNVYITRAQLMNCHVSAGTRHKVLLRRLLASFFDRNTLANSCGTGIRSSTNDPRRKPLDSRVLHAVKYYCQNFAPNFKESEMNAIAADMCTNARRVVRKSWLPKTKPLHLVEGDNYSSFISDTCKIEPDMMSMEHSFETASHDGEAGPSAEVLQ.

Positions 30–94 (CDVSVVVKGH…CYTGRLSMNM (65 aa)) constitute a BTB domain. Lys-167 is covalently cross-linked (Glycyl lysine isopeptide (Lys-Gly) (interchain with G-Cter in SUMO1); alternate). Lys-167 participates in a covalent cross-link: Glycyl lysine isopeptide (Lys-Gly) (interchain with G-Cter in SUMO2); alternate. A Glycyl lysine isopeptide (Lys-Gly) (interchain with G-Cter in SUMO2) cross-link involves residue Lys-182. Disordered stretches follow at residues 183 to 205 (RLWD…RKMA) and 242 to 279 (PSMS…EEGT). Ser-187 carries the phosphoserine modification. The span at 242–251 (PSMSERTSPG) shows a compositional bias: polar residues. Ser-245 carries the phosphoserine; by PKC modification. Low complexity predominate over residues 252 to 264 (TSSAYTSDSPSSY). Over residues 267–279 (EEDEEEDAGEEGT) the composition is skewed to acidic residues. Residues Lys-304, Lys-438, Lys-466, and Lys-485 each participate in a glycyl lysine isopeptide (Lys-Gly) (interchain with G-Cter in SUMO2) cross-link. A BEN domain is found at 360-457 (GTNVYITRAQ…DMCTNARRVV (98 aa)). Phosphoserine is present on residues Ser-492 and Ser-496.

Homooligomer; mediated by the BTB domain. Interacts with HDAC3 and HDAC4. Interacts (via BTB domain) with CUL3, PSMD7 and RCOR1. In terms of tissue distribution, ubiquitously expressed with higher expression in the brain, kidney and liver, and at lower levels in heart, lung and testes.

Its subcellular location is the nucleus. The protein localises to the cytoplasm. In terms of biological role, functions as a transcriptional repressor. Seems to function as a transcriptional corepressor in neuronal cells through recruitment of HDAC3 and HDAC4. Contributes to tumor progression, and tumor cell proliferation and survival. This may be mediated at least in part through repressing transcriptional activity of GADD45GIP1. Required for recruiting the proteasome from the nucleus to the cytoplasm and dendritic spines. Involved in the acute behavioral and neurological responses to cocaine and amphetamines. The sequence is that of Nucleus accumbens-associated protein 1 (Nacc1) from Mus musculus (Mouse).